A 565-amino-acid polypeptide reads, in one-letter code: Proline--tRNA ligase (565 aa).

It belongs to the class-II aminoacyl-tRNA synthetase family. ProS type 1 subfamily. As to quaternary structure, homodimer.

The protein resides in the cytoplasm. It carries out the reaction tRNA(Pro) + L-proline + ATP = L-prolyl-tRNA(Pro) + AMP + diphosphate. Functionally, catalyzes the attachment of proline to tRNA(Pro) in a two-step reaction: proline is first activated by ATP to form Pro-AMP and then transferred to the acceptor end of tRNA(Pro). As ProRS can inadvertently accommodate and process non-cognate amino acids such as alanine and cysteine, to avoid such errors it has two additional distinct editing activities against alanine. One activity is designated as 'pretransfer' editing and involves the tRNA(Pro)-independent hydrolysis of activated Ala-AMP. The other activity is designated 'posttransfer' editing and involves deacylation of mischarged Ala-tRNA(Pro). The misacylated Cys-tRNA(Pro) is not edited by ProRS. This Francisella tularensis subsp. tularensis (strain WY96-3418) protein is Proline--tRNA ligase.